The following is a 113-amino-acid chain: Hydrogenase maturation factor HypA (113 aa).

His2 provides a ligand contact to Ni(2+). Residues Cys73, Cys76, Cys89, and Cys92 each coordinate Zn(2+).

Belongs to the HypA/HybF family.

Involved in the maturation of [NiFe] hydrogenases. Required for nickel insertion into the metal center of the hydrogenase. The protein is Hydrogenase maturation factor HypA of Actinobacillus succinogenes (strain ATCC 55618 / DSM 22257 / CCUG 43843 / 130Z).